Consider the following 343-residue polypeptide: Mitochondrial distribution and morphology protein 34 (343 aa).

One can recognise an SMP-LTD domain in the interval 1-196; it reads MSFVFPSWST…LPGIIHRLSQ (196 aa). Disordered regions lie at residues 227 to 255 and 300 to 325; these read EVEE…IGPG and GAGT…KAKR. Over residues 306 to 317 the composition is skewed to low complexity; sequence SGRASLASSSVG.

Belongs to the MDM34 family. As to quaternary structure, component of the ER-mitochondria encounter structure (ERMES) or MDM complex, composed of MMM1, MDM10, MDM12 and MDM34.

It is found in the mitochondrion outer membrane. Component of the ERMES/MDM complex, which serves as a molecular tether to connect the endoplasmic reticulum (ER) and mitochondria. Components of this complex are involved in the control of mitochondrial shape and protein biogenesis, and function in nonvesicular lipid trafficking between the ER and mitochondria. MDM34 is required for the interaction of the ER-resident membrane protein MMM1 and the outer mitochondrial membrane-resident beta-barrel protein MDM10. This is Mitochondrial distribution and morphology protein 34 from Cryptococcus neoformans var. neoformans serotype D (strain B-3501A) (Filobasidiella neoformans).